We begin with the raw amino-acid sequence, 144 residues long: Large ribosomal subunit protein uL15 (144 aa).

The segment at 1–57 is disordered; it reads MFLNTLRPGEGSKHAPKRVGRGIGSGLGKTGGRGHKGLKSRSGGSVKPGFEGGQMPL. Residues 21–31 show a composition bias toward gly residues; sequence RGIGSGLGKTG.

It belongs to the universal ribosomal protein uL15 family. As to quaternary structure, part of the 50S ribosomal subunit.

Its function is as follows. Binds to the 23S rRNA. The sequence is that of Large ribosomal subunit protein uL15 from Marinomonas sp. (strain MWYL1).